Reading from the N-terminus, the 362-residue chain is Beta-ketoacyl-[acyl-carrier-protein] synthase III 2 (362 aa).

Catalysis depends on residues Cys-113 and His-251. Residues 252–256 form an ACP-binding region; sequence QANIR. Asn-281 is a catalytic residue.

This sequence belongs to the thiolase-like superfamily. FabH family. In terms of assembly, homodimer.

The protein resides in the cytoplasm. It carries out the reaction malonyl-[ACP] + acetyl-CoA + H(+) = 3-oxobutanoyl-[ACP] + CO2 + CoA. It functions in the pathway lipid metabolism; fatty acid biosynthesis. Catalyzes the condensation reaction of fatty acid synthesis by the addition to an acyl acceptor of two carbons from malonyl-ACP. Catalyzes the first condensation reaction which initiates fatty acid synthesis and may therefore play a role in governing the total rate of fatty acid production. Possesses both acetoacetyl-ACP synthase and acetyl transacylase activities. Its substrate specificity determines the biosynthesis of branched-chain and/or straight-chain of fatty acids. In Vibrio vulnificus (strain CMCP6), this protein is Beta-ketoacyl-[acyl-carrier-protein] synthase III 2.